Reading from the N-terminus, the 59-residue chain is Light-harvesting protein B-800-850 alpha chain E (59 aa).

Residues 1-11 are Cytoplasmic-facing; sequence MNQGRIWTVVK. The chain crosses the membrane as a helical span at residues 12 to 35; sequence PTVGLPLLLGSVTVIAILVHFAVL. His31 contacts a bacteriochlorophyll. Residues 36-59 are Periplasmic-facing; sequence SNTTWFSKYWNGKAAAIESSVSIG.

This sequence belongs to the antenna complex alpha subunit family. The core complex is formed by different alpha and beta chains, binding bacteriochlorophyll molecules, and arranged most probably in tetrameric structures disposed around the reaction center. The non-pigmented gamma chains may constitute additional components.

It localises to the cell inner membrane. Its function is as follows. Antenna complexes are light-harvesting systems, which transfer the excitation energy to the reaction centers. This is Light-harvesting protein B-800-850 alpha chain E (pucAE) from Rhodopseudomonas palustris (strain ATCC BAA-98 / CGA009).